The sequence spans 441 residues: AP-2 complex subunit mu (441 aa).

In terms of domain architecture, MHD spans 174–440 (RNELFLDVIE…IGRSGLYETR (267 aa)).

The protein belongs to the adapter complexes medium subunit family. As to quaternary structure, adapter protein complex 2 (AP-2) is a heterotetramer composed of two large adaptins (alpha-type subunit and beta-type subunits), a medium adaptin (mu-type subunit AP50) and a small adaptin (sigma-type subunit AP17). As to expression, brain, heart, lung, liver, testis and spleen.

It is found in the cell membrane. The protein resides in the membrane. It localises to the coated pit. Component of the adapter complexes which link clathrin to receptors in coated vesicles. Clathrin-associated protein complexes are believed to interact with the cytoplasmic tails of membrane proteins, leading to their selection and concentration. AP50 is a subunit of the plasma membrane adapter. Essential wnt/egl-20 signaling protein that functions in wnt/egl-20-producing cells. Required for the AP-2 complex-mediated endocytosis of membrane proteins including wntless homolog mig-14 in egl-20-producing cells. During development, regulates the migration of HSN neurons and the left and right Q neuroblasts (QL and QR, respectively) and their descendants, possibly through hox gene and wnt/egl-20 gene target mab-5, and plays a role in establishing ALM and PLM neuronal cell polarity. Regulates AWB sensory neuron cilia membrane expansion during development, potentially via localization of tub-1 and PtdIns(4,5)P2 to the ciliary base. Required for the asymmetric divisions of V5 cells. The sequence is that of AP-2 complex subunit mu (dpy-23) from Caenorhabditis elegans.